Here is a 33-residue protein sequence, read N- to C-terminus: Dermonecrotic toxin LiSicTox-alphaI-1 (33 aa).

Position 32 (Glu-32) interacts with Mg(2+).

Belongs to the arthropod phospholipase D family. Class II subfamily. Mg(2+) serves as cofactor. In terms of processing, contains 2 disulfide bonds. As to expression, expressed by the venom gland.

Its subcellular location is the secreted. The enzyme catalyses an N-(acyl)-sphingosylphosphocholine = an N-(acyl)-sphingosyl-1,3-cyclic phosphate + choline. It carries out the reaction an N-(acyl)-sphingosylphosphoethanolamine = an N-(acyl)-sphingosyl-1,3-cyclic phosphate + ethanolamine. The catalysed reaction is a 1-acyl-sn-glycero-3-phosphocholine = a 1-acyl-sn-glycero-2,3-cyclic phosphate + choline. It catalyses the reaction a 1-acyl-sn-glycero-3-phosphoethanolamine = a 1-acyl-sn-glycero-2,3-cyclic phosphate + ethanolamine. Functionally, dermonecrotic toxins cleave the phosphodiester linkage between the phosphate and headgroup of certain phospholipids (sphingolipid and lysolipid substrates), forming an alcohol (often choline) and a cyclic phosphate. This toxin acts on sphingomyelin (SM). It may also act on ceramide phosphoethanolamine (CPE), lysophosphatidylcholine (LPC) and lysophosphatidylethanolamine (LPE), but not on lysophosphatidylserine (LPS), and lysophosphatidylglycerol (LPG). It acts by transphosphatidylation, releasing exclusively cyclic phosphate products as second products. In vivo, intradermal injection induces dermonecrosis. Induces hemolysis, increased vascular permeability, edema, inflammatory response, and platelet aggregation. This chain is Dermonecrotic toxin LiSicTox-alphaI-1, found in Loxosceles intermedia (Brown spider).